Consider the following 305-residue polypeptide: Ornithine carbamoyltransferase (305 aa).

Carbamoyl phosphate contacts are provided by residues 50 to 53 (STRT), Q77, R101, and 128 to 131 (HPCQ). L-ornithine is bound by residues N162, D220, and 224–225 (SM). Carbamoyl phosphate contacts are provided by residues 260 to 261 (CL) and R288.

It belongs to the aspartate/ornithine carbamoyltransferase superfamily. OTCase family.

It localises to the cytoplasm. The catalysed reaction is carbamoyl phosphate + L-ornithine = L-citrulline + phosphate + H(+). Its pathway is amino-acid degradation; L-arginine degradation via ADI pathway; carbamoyl phosphate from L-arginine: step 2/2. Its function is as follows. Reversibly catalyzes the transfer of the carbamoyl group from carbamoyl phosphate (CP) to the N(epsilon) atom of ornithine (ORN) to produce L-citrulline. This chain is Ornithine carbamoyltransferase, found in Akkermansia muciniphila (strain ATCC BAA-835 / DSM 22959 / JCM 33894 / BCRC 81048 / CCUG 64013 / CIP 107961 / Muc).